The chain runs to 189 residues: uncharacterized protein (189 aa).

The first 19 residues, 1–19 (MKRVLFFLLMIFVSFGVIA), serve as a signal peptide directing secretion.

This is an uncharacterized protein from Escherichia coli (strain K12).